Here is a 218-residue protein sequence, read N- to C-terminus: Putative glutamine transport system permease protein GlnP (218 aa).

In terms of domain architecture, ABC transmembrane type-1 spans 19-208 (TLVTLKYSII…ILVMLISFIA (190 aa)). 4 helical membrane passes run 25 to 45 (YSII…ICKV), 57 to 79 (FYTS…FAAP), 86 to 108 (FSVF…SEVI), and 187 to 207 (FFPM…ISFI).

This sequence belongs to the binding-protein-dependent transport system permease family. HisMQ subfamily.

The protein resides in the cell inner membrane. In terms of biological role, part of the binding-protein-dependent transport system for glutamine; probably responsible for the translocation of the substrate across the membrane. The chain is Putative glutamine transport system permease protein GlnP (glnP) from Rickettsia typhi (strain ATCC VR-144 / Wilmington).